A 297-amino-acid chain; its full sequence is Formamidopyrimidine-DNA glycosylase (297 aa).

Proline 2 functions as the Schiff-base intermediate with DNA in the catalytic mechanism. Glutamate 3 serves as the catalytic Proton donor. Lysine 58 (proton donor; for beta-elimination activity) is an active-site residue. DNA is bound by residues histidine 104, arginine 127, and lysine 170. The segment at 261–297 adopts an FPG-type zinc-finger fold; it reads SVYDREGKPCRKEGCSGTIQRFVQGGRSTFYCPICQR. Arginine 287 acts as the Proton donor; for delta-elimination activity in catalysis.

The protein belongs to the FPG family. In terms of assembly, monomer. The cofactor is Zn(2+).

It catalyses the reaction Hydrolysis of DNA containing ring-opened 7-methylguanine residues, releasing 2,6-diamino-4-hydroxy-5-(N-methyl)formamidopyrimidine.. It carries out the reaction 2'-deoxyribonucleotide-(2'-deoxyribose 5'-phosphate)-2'-deoxyribonucleotide-DNA = a 3'-end 2'-deoxyribonucleotide-(2,3-dehydro-2,3-deoxyribose 5'-phosphate)-DNA + a 5'-end 5'-phospho-2'-deoxyribonucleoside-DNA + H(+). Its function is as follows. Involved in base excision repair of DNA damaged by oxidation or by mutagenic agents. Acts as a DNA glycosylase that recognizes and removes damaged bases. Has a preference for oxidized purines, such as 7,8-dihydro-8-oxoguanine (8-oxoG). Has AP (apurinic/apyrimidinic) lyase activity and introduces nicks in the DNA strand. Cleaves the DNA backbone by beta-delta elimination to generate a single-strand break at the site of the removed base with both 3'- and 5'-phosphates. The chain is Formamidopyrimidine-DNA glycosylase from Chelativorans sp. (strain BNC1).